Consider the following 673-residue polypeptide: UvrABC system protein B (673 aa).

Positions 26–414 (ANFEAGLAKQ…AGEVTELVVR (389 aa)) constitute a Helicase ATP-binding domain. Residue 39-46 (GVTGSGKT) coordinates ATP. A Beta-hairpin motif is present at residues 92-115 (YYDYYQPEAYVPSSDTFIEKDSSI). The Helicase C-terminal domain maps to 431–597 (QVDDLMSEVH…SVERPIADIM (167 aa)). Basic and acidic residues-rich tracts occupy residues 600–609 (ARDDAAEKKS) and 618–628 (HVAEETPDYRA). The interval 600–628 (ARDDAAEKKSGKGRSKSRHVAEETPDYRA) is disordered. The 36-residue stretch at 635–670 (AGKLKSLEQKMYQHAKDLEFEAAAQIRDQIQKLKAA) folds into the UVR domain.

It belongs to the UvrB family. Forms a heterotetramer with UvrA during the search for lesions. Interacts with UvrC in an incision complex.

It is found in the cytoplasm. The UvrABC repair system catalyzes the recognition and processing of DNA lesions. A damage recognition complex composed of 2 UvrA and 2 UvrB subunits scans DNA for abnormalities. Upon binding of the UvrA(2)B(2) complex to a putative damaged site, the DNA wraps around one UvrB monomer. DNA wrap is dependent on ATP binding by UvrB and probably causes local melting of the DNA helix, facilitating insertion of UvrB beta-hairpin between the DNA strands. Then UvrB probes one DNA strand for the presence of a lesion. If a lesion is found the UvrA subunits dissociate and the UvrB-DNA preincision complex is formed. This complex is subsequently bound by UvrC and the second UvrB is released. If no lesion is found, the DNA wraps around the other UvrB subunit that will check the other stand for damage. The polypeptide is UvrABC system protein B (Xanthomonas axonopodis pv. citri (strain 306)).